We begin with the raw amino-acid sequence, 578 residues long: MKPDYDVLIIGSGFGGSVTALRLTEKGYRVGVLEAGRRFSDEEFAKTSWDLRKFLWAPRLGCYGIQRIHPLRNVMILAGAGVGGGSLNYANTLYVPPEPFFADQQWSHITDWRGELMPHYQQAQRMLGVVQNPTFTDADRIVKEVADEMGFGDTWVPTPVGVFFGPDGTKTPGKTVPDPYFGGAGPARTGCLECGCCMTGCRHGAKNTLVKNYLGLAESAGAQVIPMTTVKGFERRSDGLWEVRTVRTGSWLRRDRRTFTATQLVLAAGTWGTQHLLFKMRDRGRLPGLSKRLGVLTRTNSESIVGAATLKVNPDLDLTHGVAITSSIHPTADTHIEPVRYGKGSNAMGLLQTLMTDGSGPQGTDVPRWRQLLQTASQDPRGTIRMLNPRQWSERTVIALVMQHLDNSITTFTKRGKLGIRWYSSKQGHGEPNPTWIPIGNQVTRRIAAKIDGVAGGTWGELFNIPLTAHFLGGAVIGDDPEHGVIDPYHRVYGYPTLYVVDGAAISANLGVNPSLSIAAQAERAASLWPNKGETDRRPPQGEPYRRLAPIQPAHPVVPADAPGALRWLPIDPVSNAG.

The FAD site is built by Gly-15, Glu-34, Gly-85, Ala-90, and Val-230. The Proton acceptor role is filled by His-470. Gly-503 contacts FAD. Positions 529–551 (WPNKGETDRRPPQGEPYRRLAPI) are disordered. Over residues 533–546 (GETDRRPPQGEPYR) the composition is skewed to basic and acidic residues.

The protein belongs to the GMC oxidoreductase family. Requires FAD as cofactor.

The protein localises to the secreted. It catalyses the reaction cholesterol + O2 = cholest-5-en-3-one + H2O2. The catalysed reaction is cholest-5-en-3-one = cholest-4-en-3-one. Its pathway is steroid metabolism; cholesterol degradation. Functionally, bifunctional enzyme that catalyzes the oxidation and isomerization of cholesterol to cholestenone (cholest-4-en-3-one), an initial step in the cholesterol degradation process. Contributes to virulence. This Mycobacterium tuberculosis (strain CDC 1551 / Oshkosh) protein is Cholesterol oxidase (choD).